The primary structure comprises 285 residues: Probable endonuclease 4 (285 aa).

The Zn(2+) site is built by H69, H109, E145, D179, H182, H216, D229, H231, and E261.

This sequence belongs to the AP endonuclease 2 family. Zn(2+) is required as a cofactor.

The catalysed reaction is Endonucleolytic cleavage to 5'-phosphooligonucleotide end-products.. Functionally, endonuclease IV plays a role in DNA repair. It cleaves phosphodiester bonds at apurinic or apyrimidinic (AP) sites, generating a 3'-hydroxyl group and a 5'-terminal sugar phosphate. In Shigella sonnei (strain Ss046), this protein is Probable endonuclease 4.